Reading from the N-terminus, the 570-residue chain is Periplasmic trehalase (570 aa).

The first 34 residues, 1–34, serve as a signal peptide directing secretion; it reads MIPPEIRRSVLLQKAIKLALAGTLLTFASFSATA. Substrate-binding positions include Arg-159, 166 to 167, Asn-203, 212 to 214, 284 to 286, and Gly-317; these read WD, RSQ, and RPE. Active-site proton donor/acceptor residues include Asp-319 and Glu-503. Glu-518 is a binding site for substrate. Residues 544–570 are disordered; it reads KPCDSVPSTRPASLSATPTKTPSAATQ. The segment covering 554–570 has biased composition (low complexity); it reads PASLSATPTKTPSAATQ.

It belongs to the glycosyl hydrolase 37 family. Monomer.

The protein resides in the periplasm. The catalysed reaction is alpha,alpha-trehalose + H2O = alpha-D-glucose + beta-D-glucose. In terms of biological role, provides the cells with the ability to utilize trehalose at high osmolarity by splitting it into glucose molecules that can subsequently be taken up by the phosphotransferase-mediated uptake system. This Salmonella dublin (strain CT_02021853) protein is Periplasmic trehalase.